A 306-amino-acid chain; its full sequence is Stimulator of interferon genes protein 5 (306 aa).

The interval 1-50 (MMSNDSQSEKRTAKWTGSGTPIAEGEESSSPSAHQTRQKATAADDDDDQQ) is disordered. Residues Y119, R180, and R186 each coordinate 2',3'-cGAMP.

This sequence belongs to the STING family.

Its function is as follows. Facilitator of innate immune signaling that acts as a sensor of second messenger signals produced by cyclic GMP-AMP synthase-like receptors (cGLRs) and promotes the production of type I interferon. Innate immune response is triggered in response to nucleotides from viruses and bacteria delivered to the cytoplasm. Acts by binding cyclic dinucleotides: recognizes and binds 2'-3' linked cGAMP (2'-3'-cGAMP), a second messengers produced by cGLRs in response to nucleotides in the cytosol, such as double-stranded RNA (dsRNA). Upon binding to 2'-3'-cGAMP, oligomerizes and promotes the recruitment and subsequent activation of the transcription factor IRF3 to induce expression of type I interferon. The sequence is that of Stimulator of interferon genes protein 5 from Stylophora pistillata (Smooth cauliflower coral).